The primary structure comprises 68 residues: Large ribosomal subunit protein uL29 (68 aa).

The protein belongs to the universal ribosomal protein uL29 family.

This is Large ribosomal subunit protein uL29 from Nitrobacter hamburgensis (strain DSM 10229 / NCIMB 13809 / X14).